The primary structure comprises 1735 residues: Inactive tyrosine-protein kinase PEAK1 (1735 aa).

2 disordered regions span residues L26–A66 and L111–N145. Composition is skewed to polar residues over residues L111–E121 and D130–N145. S282 is modified (phosphoserine). Disordered regions lie at residues N324–V410, G491–G514, and S537–I580. A compositionally biased stretch (low complexity) spans S325–S336. Polar residues predominate over residues T337 to V365. Residues N367 to S378 show a composition bias toward low complexity. Over residues T384–G393 the composition is skewed to polar residues. Residues S498 to P509 are compositionally biased toward low complexity. Phosphoserine occurs at positions 537, 569, and 584. The span at A566–I580 shows a compositional bias: polar residues. Y632 and Y638 each carry phosphotyrosine. S645 carries the post-translational modification Phosphoserine. Y662 bears the Phosphotyrosine mark. Disordered regions lie at residues E663–A762, P800–A919, and R1019–Y1097. Composition is skewed to polar residues over residues Q704–T735, A745–S757, and L819–A839. Phosphoserine occurs at positions 824 and 825. The span at T847–S863 shows a compositional bias: low complexity. Positions E864 to R873 are enriched in pro residues. The segment covering Y879–S901 has biased composition (polar residues). S897 carries the post-translational modification Phosphoserine. Basic and acidic residues-rich tracts occupy residues T902–A919 and A1037–R1055. Residues E1076–D1086 show a composition bias toward acidic residues. T1141 carries the post-translational modification Phosphothreonine. At Y1177 the chain carries Phosphotyrosine. Residues E1274 to A1300 are required for homodimerization. Residues Q1302–F1664 form the Protein kinase domain. At S1363 the chain carries Phosphoserine. Residues W1394 to R1445 form a disordered region. Residues P1659–L1732 form a required for homodimerization region.

This sequence belongs to the protein kinase superfamily. As to quaternary structure, homodimer. Interacts with BCAR1 and CRK. Interacts with PRAG1. Interacts (when phosphorylated at Tyr-1177) with SHC1 (via PID domain). Found in a complex with PPP1CA, PPP1CC and SHC1. Interacts (when phosphorylated at Tyr-632) with tensin TNS3 (when phosphorylated on the SH2 domain); TNS3 also interacts with integrins ITGB1, ITGB3 and ITGB5 and mediates their association with PEAK1. Phosphorylated on tyrosine in a CSK-dependent manner in response to adhesion to fibronectin and to EGF stimulation. Phosphorylation at Tyr-662 by a Src family kinase controls subcellular localization to focal adhesion and focal adhesion dynamics. Phosphorylation at Tyr-1177 is essential for binding to SHC1. Phosphorylation at Tyr-632 promotes interaction with tensin TNS3.

It localises to the cytoplasm. The protein localises to the cytoskeleton. Its subcellular location is the cell junction. It is found in the focal adhesion. Probable catalytically inactive kinase. Scaffolding protein that regulates the cytoskeleton to control cell spreading and migration by modulating focal adhesion dynamics. Acts as a scaffold for mediating EGFR signaling. This is Inactive tyrosine-protein kinase PEAK1 (Peak1) from Mus musculus (Mouse).